The following is a 357-amino-acid chain: Phosphoribosylformylglycinamidine cyclo-ligase (357 aa).

It belongs to the AIR synthase family.

The protein resides in the cytoplasm. The catalysed reaction is 2-formamido-N(1)-(5-O-phospho-beta-D-ribosyl)acetamidine + ATP = 5-amino-1-(5-phospho-beta-D-ribosyl)imidazole + ADP + phosphate + H(+). It functions in the pathway purine metabolism; IMP biosynthesis via de novo pathway; 5-amino-1-(5-phospho-D-ribosyl)imidazole from N(2)-formyl-N(1)-(5-phospho-D-ribosyl)glycinamide: step 2/2. In Nitrobacter winogradskyi (strain ATCC 25391 / DSM 10237 / CIP 104748 / NCIMB 11846 / Nb-255), this protein is Phosphoribosylformylglycinamidine cyclo-ligase.